We begin with the raw amino-acid sequence, 349 residues long: Cdc42 effector protein 4 (349 aa).

K5 is subject to N6-methyllysine. S18 carries the post-translational modification Phosphoserine. One can recognise a CRIB domain in the interval 27 to 41 (ISAPLGDFRHTMHVG). 4 positions are modified to phosphoserine: S64, S103, S107, and S116. Residues 123-132 (KEAAEKDSSK) show a composition bias toward basic and acidic residues. 3 disordered regions span residues 123–172 (KEAA…LLDE), 220–240 (QWGS…GPSS), and 278–349 (GWAV…EIRV). 8 positions are modified to phosphoserine: S136, S138, S140, S154, S165, S223, S285, and S288. Low complexity predominate over residues 280–308 (AVVAPSPSSARSVGSHTTRDSSSLSSYTS). Positions 311–322 (LEERSPAFRGPD) are enriched in basic and acidic residues. Residues 338-349 (FMDEEEEDEIRV) are compositionally biased toward acidic residues.

It belongs to the BORG/CEP family. Interacts with CDC42 and RHOQ, in a GTP-dependent manner. In terms of tissue distribution, ubiquitous.

It is found in the endomembrane system. The protein resides in the cytoplasm. It localises to the cytoskeleton. In terms of biological role, probably involved in the organization of the actin cytoskeleton. May act downstream of CDC42 to induce actin filament assembly leading to cell shape changes. Induces pseudopodia formation, when overexpressed in fibroblasts. The chain is Cdc42 effector protein 4 (Cdc42ep4) from Mus musculus (Mouse).